The sequence spans 185 residues: ATP synthase subunit delta (185 aa).

The protein belongs to the ATPase delta chain family. In terms of assembly, F-type ATPases have 2 components, F(1) - the catalytic core - and F(0) - the membrane proton channel. F(1) has five subunits: alpha(3), beta(3), gamma(1), delta(1), epsilon(1). F(0) has three main subunits: a(1), b(2) and c(10-14). The alpha and beta chains form an alternating ring which encloses part of the gamma chain. F(1) is attached to F(0) by a central stalk formed by the gamma and epsilon chains, while a peripheral stalk is formed by the delta and b chains.

Its subcellular location is the cell inner membrane. Functionally, f(1)F(0) ATP synthase produces ATP from ADP in the presence of a proton or sodium gradient. F-type ATPases consist of two structural domains, F(1) containing the extramembraneous catalytic core and F(0) containing the membrane proton channel, linked together by a central stalk and a peripheral stalk. During catalysis, ATP synthesis in the catalytic domain of F(1) is coupled via a rotary mechanism of the central stalk subunits to proton translocation. In terms of biological role, this protein is part of the stalk that links CF(0) to CF(1). It either transmits conformational changes from CF(0) to CF(1) or is implicated in proton conduction. The polypeptide is ATP synthase subunit delta (Phocaeicola vulgatus (strain ATCC 8482 / DSM 1447 / JCM 5826 / CCUG 4940 / NBRC 14291 / NCTC 11154) (Bacteroides vulgatus)).